Here is a 602-residue protein sequence, read N- to C-terminus: Threonine--tRNA ligase (602 aa).

Residues 208–499 form a catalytic region; it reads DHRKLGIELK…LTEHCAGEFP (292 aa). Residues cysteine 300, histidine 351, and histidine 476 each coordinate Zn(2+).

It belongs to the class-II aminoacyl-tRNA synthetase family. As to quaternary structure, homodimer. Zn(2+) serves as cofactor.

The protein localises to the cytoplasm. The catalysed reaction is tRNA(Thr) + L-threonine + ATP = L-threonyl-tRNA(Thr) + AMP + diphosphate + H(+). Its function is as follows. Catalyzes the attachment of threonine to tRNA(Thr) in a two-step reaction: L-threonine is first activated by ATP to form Thr-AMP and then transferred to the acceptor end of tRNA(Thr). Also edits incorrectly charged L-seryl-tRNA(Thr). This Campylobacter jejuni subsp. doylei (strain ATCC BAA-1458 / RM4099 / 269.97) protein is Threonine--tRNA ligase.